We begin with the raw amino-acid sequence, 23 residues long: Protein YqfH (23 aa).

This chain is Protein YqfH, found in Escherichia coli (strain K12).